A 214-amino-acid polypeptide reads, in one-letter code: Adenylate kinase (214 aa).

Residue 10–15 (GAGKGT) coordinates ATP. The tract at residues 30 to 59 (STGDMLRAAIKAGTELGKQAKAVIDAGQLV) is NMP. Residues Thr31, Arg36, 57–59 (QLV), 85–88 (GFPR), and Gln92 each bind AMP. Residues 122-159 (GRRAHLPSGRTYHVVYNPPKVEGKDDVTGEDLVVRDDD) are LID. Residues Arg123 and 132-133 (TY) each bind ATP. AMP contacts are provided by Arg156 and Arg167. Position 200 (Lys200) interacts with ATP.

This sequence belongs to the adenylate kinase family. Monomer.

The protein localises to the cytoplasm. It catalyses the reaction AMP + ATP = 2 ADP. It functions in the pathway purine metabolism; AMP biosynthesis via salvage pathway; AMP from ADP: step 1/1. Its function is as follows. Catalyzes the reversible transfer of the terminal phosphate group between ATP and AMP. Plays an important role in cellular energy homeostasis and in adenine nucleotide metabolism. The sequence is that of Adenylate kinase from Vibrio parahaemolyticus serotype O3:K6 (strain RIMD 2210633).